Reading from the N-terminus, the 72-residue chain is Small, acid-soluble spore protein C (72 aa).

It belongs to the alpha/beta-type SASP family.

Functionally, SASP are bound to spore DNA. They are double-stranded DNA-binding proteins that cause DNA to change to an a-like conformation. They protect the DNA backbone from chemical and enzymatic cleavage and are thus involved in dormant spore's high resistance to UV light. This Bacillus subtilis (strain 168) protein is Small, acid-soluble spore protein C (sspC).